Consider the following 257-residue polypeptide: Homeobox protein goosecoid (257 aa).

Residues 160–219 (KRRHRTIFTDEQLEALENLFQETKYPDVGTREQLARKVHLREEKVEVWFKNRRAKWRRQK) constitute a DNA-binding region (homeobox). The interval 213-257 (AKWRRQKRSSSEESENAEKWNKTSSSKASPEKREEEGKSDLDSDS) is disordered. Over residues 241–257 (SPEKREEEGKSDLDSDS) the composition is skewed to basic and acidic residues.

This sequence belongs to the paired homeobox family. Bicoid subfamily.

The protein localises to the nucleus. Functionally, regulates chordin (CHRD). May play a role in spatial programing within discrete embryonic fields or lineage compartments during organogenesis. In concert with NKX3-2, plays a role in defining the structural components of the middle ear; required for the development of the entire tympanic ring. Probably involved in the regulatory networks that define neural crest cell fate specification and determine mesoderm cell lineages in mammals. The polypeptide is Homeobox protein goosecoid (GSC) (Gorilla gorilla gorilla (Western lowland gorilla)).